We begin with the raw amino-acid sequence, 119 residues long: Large ribosomal subunit protein bL20 (119 aa).

Belongs to the bacterial ribosomal protein bL20 family.

In terms of biological role, binds directly to 23S ribosomal RNA and is necessary for the in vitro assembly process of the 50S ribosomal subunit. It is not involved in the protein synthesizing functions of that subunit. The protein is Large ribosomal subunit protein bL20 of Streptococcus pneumoniae serotype 2 (strain D39 / NCTC 7466).